The following is a 261-amino-acid chain: Glucose 1-dehydrogenase 4 (261 aa).

Position 11 to 35 (11 to 35 (VITGGSTGLGRAMAVRFGQEEAKVV)) interacts with NAD(+). S145 serves as a coordination point for substrate. The active-site Proton acceptor is Y158.

The protein belongs to the short-chain dehydrogenases/reductases (SDR) family. As to quaternary structure, homotetramer.

It carries out the reaction D-glucose + NAD(+) = D-glucono-1,5-lactone + NADH + H(+). The catalysed reaction is D-glucose + NADP(+) = D-glucono-1,5-lactone + NADPH + H(+). The chain is Glucose 1-dehydrogenase 4 (gdhIV) from Priestia megaterium (Bacillus megaterium).